Consider the following 210-residue polypeptide: SAP domain-containing ribonucleoprotein (210 aa).

Ala-2 bears the N-acetylalanine mark. An SAP domain is found at 8 to 42 (LHKLKLAELKQECLARGLETKGIKQDLINRLQAYL). N6-acetyllysine is present on Lys-10. Over residues 45-64 (HAEEEANEEDVLGDETEEEE) the composition is skewed to acidic residues. The tract at residues 45–87 (HAEEEANEEDVLGDETEEEEPKPIELPVKEEEPPEKAVDMASE) is disordered. The segment covering 65–87 (PKPIELPVKEEEPPEKAVDMASE) has biased composition (basic and acidic residues). The residue at position 142 (Lys-142) is an N6-acetyllysine. Positions 162-210 (SSISRKSEDDEKLKKRKERFGIVTSSAGTGTTEDTEAKKRKRAERFGIA) are disordered. Ser-163 carries the post-translational modification Phosphoserine. A compositionally biased stretch (polar residues) spans 184–193 (VTSSAGTGTT).

Belongs to the SAP domain-containing ribonucleoprotein family. In terms of assembly, interacts with DDX39A. Interacts with FUS. Interacts (via the C-terminal domain) with DDX39B; the interaction is direct and facilitates RNA binding of DDX39B. Component of the transcription/export (TREX) complex at least composed of ALYREF/THOC4, DDX39B, SARNP/CIP29, CHTOP and the THO subcomplex; TREX seems to have dynamic structure involving ATP-dependent remodeling; in the complex interacts directly with DDX39B in a ATP-dependent manner which bridges it to ALYREF/THOC4.

It is found in the nucleus. The protein resides in the nucleus speckle. Its function is as follows. Binds both single-stranded and double-stranded DNA with higher affinity for the single-stranded form. Specifically binds to scaffold/matrix attachment region DNA. Also binds single-stranded RNA. Enhances RNA unwinding activity of DDX39A. May participate in important transcriptional or translational control of cell growth, metabolism and carcinogenesis. Component of the TREX complex which is thought to couple mRNA transcription, processing and nuclear export, and specifically associates with spliced mRNA and not with unspliced pre-mRNA. The TREX complex is recruited to spliced mRNAs by a transcription-independent mechanism, binds to mRNA upstream of the exon-junction complex (EJC) and is recruited in a splicing- and cap-dependent manner to a region near the 5' end of the mRNA where it functions in mRNA export to the cytoplasm via the TAP/NXF1 pathway. Associates with DDX39B, which facilitates RNA binding of DDX39B and likely plays a role in mRNA export. This Mus musculus (Mouse) protein is SAP domain-containing ribonucleoprotein (Sarnp).